We begin with the raw amino-acid sequence, 486 residues long: UDP-N-acetylmuramate--L-alanine ligase (486 aa).

123–129 (GTHGKTT) contacts ATP.

It belongs to the MurCDEF family.

The protein localises to the cytoplasm. It catalyses the reaction UDP-N-acetyl-alpha-D-muramate + L-alanine + ATP = UDP-N-acetyl-alpha-D-muramoyl-L-alanine + ADP + phosphate + H(+). It functions in the pathway cell wall biogenesis; peptidoglycan biosynthesis. Functionally, cell wall formation. This is UDP-N-acetylmuramate--L-alanine ligase from Pseudomonas savastanoi pv. phaseolicola (strain 1448A / Race 6) (Pseudomonas syringae pv. phaseolicola (strain 1448A / Race 6)).